We begin with the raw amino-acid sequence, 995 residues long: Secreted protein CSS1 (995 aa).

Residues 1-23 (MFNRLNKFQAALALALYSQSALG) form the signal peptide. In terms of domain architecture, Methyl-accepting transducer spans 26–253 (YSNSTSISSN…GVSSSGSQSV (228 aa)). N-linked (GlcNAc...) asparagine glycosylation is found at Asn-28 and Asn-35. Residues 98-276 (SSSSVSDVSS…TSSASTASGS (179 aa)) are disordered. N-linked (GlcNAc...) asparagine glycans are attached at residues Asn-468 and Asn-664.

The protein belongs to the SRP1/TIP1 family.

The protein localises to the secreted. Functionally, secreted protein that may be involved in cell wall organization and biosynthesis. The polypeptide is Secreted protein CSS1 (Saccharomyces cerevisiae (strain ATCC 204508 / S288c) (Baker's yeast)).